The following is a 456-amino-acid chain: G-protein coupled receptor 39 (456 aa).

Residues 1 to 34 (MASSSGSNHICSRVIDHSHVPEFEVATWIKITLI) are Extracellular-facing. Cystine bridges form between cysteine 11-cysteine 191 and cysteine 108-cysteine 210. Histidine 17 and histidine 19 together coordinate Zn(2+). A helical membrane pass occupies residues 35 to 55 (LVYLIIFVVGILGNSVTIRVT). Topologically, residues 56 to 69 (QVLQKKGYLQKEVT) are cytoplasmic. Residues 70 to 89 (DHMVSLACSDILVFLIGMPM) traverse the membrane as a helical segment. Residues 90 to 109 (EFYSIIWNPLTTPSYALSCK) lie on the Extracellular side of the membrane. A helical membrane pass occupies residues 110–131 (LHTFLFETCSYATLLHVLTLSF). Over 132–151 (ERYIAICHPFKYKAVSGPRQ) the chain is Cytoplasmic. Residues 152–172 (VKLLIGFVWVTSALVALPLLF) traverse the membrane as a helical segment. Topologically, residues 173–217 (AMGIEYPLVNVPTHKGLNCNLSRTRHHDEPGNSNMSICTNLSNRW) are extracellular. Asparagine 192 and asparagine 206 each carry an N-linked (GlcNAc...) asparagine glycan. The helical transmembrane segment at 218 to 242 (EVFQSSIFGAFAVYLVVLASVAFMC) threads the bilayer. Residues 243–283 (WNMMKVLMKSKQGTLAGTGPQLQLRKSESEESRTARRQTII) lie on the Cytoplasmic side of the membrane. The helical transmembrane segment at 284-305 (FLRLIVVTLAVCWMPNQIRRIM) threads the bilayer. Over 306-323 (AAAKPKHDWTRTYFRAYM) the chain is Extracellular. A helical transmembrane segment spans residues 324–344 (ILLPFSDTFFYLSSVVNPLLY). Over 345–456 (NVSSQQFRKV…TENSLQEQEV (112 aa)) the chain is Cytoplasmic. A Phosphoserine modification is found at serine 397. The disordered stretch occupies residues 415 to 456 (FQTEAKPGEAKPQPLSPESPQTGSETKPAGSTTENSLQEQEV). Residues 430–456 (SPESPQTGSETKPAGSTTENSLQEQEV) show a composition bias toward polar residues.

It belongs to the G-protein coupled receptor 1 family. As to quaternary structure, interacts with HTR1A. Interacts with GALR1. Expression is detected in septumamygdala, parietal cells, enterocytes, neurons and pancreas, in peripheral organs such as the duodenum and kidney but not in the pituitary and hypothalamus.

It localises to the cell membrane. Its function is as follows. Zinc-sensing receptor that can sense changes in extracellular Zn(2+), mediate Zn(2+) signal transmission, and participates in the regulation of numerous physiological processes including glucose homeostasis regulation, gastrointestinal mobility, hormone secretion and cell death. Activation by Zn(2+) in keratinocytes increases the intracellular concentration of Ca(2+) and activates the ERK/MAPK and PI3K/AKT signaling pathways leading to epithelial repair. Plays an essential role in normal wound healing by inducing the production of cytokines including the major inflammatory cytokine IL6 via the PKC/MAPK/CEBPB pathway. Regulates adipose tissue metabolism, especially lipolysis, and regulates the function of lipases, such as hormone-sensitive lipase and adipose triglyceride lipase. Plays a role in the inhibition of cell death and protects against oxidative, endoplasmic reticulum and mitochondrial stress by inducing secretion of the cytoprotective pigment epithelium-derived growth factor (PEDF) and probably other protective transcripts in a GNA13/RHOA/SRE-dependent manner. Forms dynamic heteroreceptor complexes with HTR1A and GALR1 depending on cell type or specific physiological states, resulting in signaling diversity: HTR1A-GPR39 shows additive increase in signaling along the serum response element (SRE) and NF-kappa-B pathways while GALR1 acts as an antagonist blocking SRE. The chain is G-protein coupled receptor 39 (Gpr39) from Mus musculus (Mouse).